The sequence spans 154 residues: Xanthine-guanine phosphoribosyltransferase (154 aa).

5-phospho-alpha-D-ribose 1-diphosphate-binding positions include 37–38 (RG), R69, and 88–96 (EDLVDSGDT). Residue R69 coordinates GMP. A Mg(2+)-binding site is contributed by D89. Positions 92 and 135 each coordinate guanine. Residues D92 and I135 each coordinate xanthine. Residues 92 to 96 (DSGDT) and 134 to 135 (WI) contribute to the GMP site.

The protein belongs to the purine/pyrimidine phosphoribosyltransferase family. XGPT subfamily. As to quaternary structure, homotetramer. Mg(2+) is required as a cofactor.

It localises to the cell inner membrane. It catalyses the reaction GMP + diphosphate = guanine + 5-phospho-alpha-D-ribose 1-diphosphate. The enzyme catalyses XMP + diphosphate = xanthine + 5-phospho-alpha-D-ribose 1-diphosphate. The catalysed reaction is IMP + diphosphate = hypoxanthine + 5-phospho-alpha-D-ribose 1-diphosphate. It participates in purine metabolism; GMP biosynthesis via salvage pathway; GMP from guanine: step 1/1. The protein operates within purine metabolism; XMP biosynthesis via salvage pathway; XMP from xanthine: step 1/1. Functionally, purine salvage pathway enzyme that catalyzes the transfer of the ribosyl-5-phosphate group from 5-phospho-alpha-D-ribose 1-diphosphate (PRPP) to the N9 position of the 6-oxopurines guanine and xanthine to form the corresponding ribonucleotides GMP (guanosine 5'-monophosphate) and XMP (xanthosine 5'-monophosphate), with the release of PPi. To a lesser extent, also acts on hypoxanthine. The polypeptide is Xanthine-guanine phosphoribosyltransferase (Vibrio parahaemolyticus serotype O3:K6 (strain RIMD 2210633)).